A 219-amino-acid polypeptide reads, in one-letter code: Deoxyribose-phosphate aldolase (219 aa).

Residue Asp-93 is the Proton donor/acceptor of the active site. Catalysis depends on Lys-154, which acts as the Schiff-base intermediate with acetaldehyde. Lys-179 serves as the catalytic Proton donor/acceptor.

The protein belongs to the DeoC/FbaB aldolase family. DeoC type 1 subfamily.

The protein resides in the cytoplasm. It carries out the reaction 2-deoxy-D-ribose 5-phosphate = D-glyceraldehyde 3-phosphate + acetaldehyde. It participates in carbohydrate degradation; 2-deoxy-D-ribose 1-phosphate degradation; D-glyceraldehyde 3-phosphate and acetaldehyde from 2-deoxy-alpha-D-ribose 1-phosphate: step 2/2. In terms of biological role, catalyzes a reversible aldol reaction between acetaldehyde and D-glyceraldehyde 3-phosphate to generate 2-deoxy-D-ribose 5-phosphate. In Haloquadratum walsbyi (strain DSM 16790 / HBSQ001), this protein is Deoxyribose-phosphate aldolase.